A 460-amino-acid chain; its full sequence is Argininosuccinate lyase (460 aa).

Belongs to the lyase 1 family. Argininosuccinate lyase subfamily.

The protein resides in the cytoplasm. The enzyme catalyses 2-(N(omega)-L-arginino)succinate = fumarate + L-arginine. It participates in amino-acid biosynthesis; L-arginine biosynthesis; L-arginine from L-ornithine and carbamoyl phosphate: step 3/3. The polypeptide is Argininosuccinate lyase (Campylobacter jejuni subsp. doylei (strain ATCC BAA-1458 / RM4099 / 269.97)).